A 524-amino-acid polypeptide reads, in one-letter code: 56 kDa type-specific antigen (524 aa).

The first 22 residues, 1–22 (MKKIMLIASAMSALSLPFSASA), serve as a signal peptide directing secretion. The chain crosses the membrane as a helical span at residues 67–87 (LTTGLPFGGTLAAGMTIAPGF). 2 disordered regions span residues 112–132 (SKGE…RKRF) and 387–422 (EKLA…KGKE). Composition is skewed to basic and acidic residues over residues 395 to 405 (EDAKNQGEGDC) and 413 to 422 (EKSKEGKGKE). The chain crosses the membrane as a helical span at residues 472-492 (TGMVASGALGVAINAAEGVYV).

It localises to the cell membrane. Its function is as follows. May be an adherent factor for rickettsial adsorption to the host-cell surface and a determinant of virulence of individual rickettsial strain. It is the major outer membrane protein. The sequence is that of 56 kDa type-specific antigen from Orientia tsutsugamushi (Rickettsia tsutsugamushi).